We begin with the raw amino-acid sequence, 35 residues long: LVKCRGTSDCGRPCQQQTGCPNSKCINRMCKCYGC.

4 cysteine pairs are disulfide-bonded: cysteine 4/cysteine 25, cysteine 10/cysteine 30, cysteine 14/cysteine 32, and cysteine 20/cysteine 35.

It belongs to the short scorpion toxin superfamily. Potassium channel inhibitor family. Alpha-KTx 06 subfamily. In terms of tissue distribution, expressed by the venom gland.

The protein localises to the secreted. In terms of biological role, potently and reversibly inhibits the insect voltage-gated Shaker (Sh) potassium channel (isoform alpha (B)), the mammalian voltage-gated potassium channels Kv1.2/KCNA2 (IC(50)=0.44 nM), and the calcium-activated potassium channel KCa2.3/KCNN3 (Kd=330 nM). Its effect on Kv1.3/KCNA3 is controversial, since this channel is voltage-independently inhibited in PubMed:9464266, but is not affected in PubMed:10931199. Furthermore, this toxin competes with apamin (a small conductance calcium-activated potassium channel inhibitor) for binding to rat brain synaptosomes. The sequence is that of Potassium channel toxin alpha-KTx 6.1 from Pandinus imperator (Emperor scorpion).